The sequence spans 267 residues: Small ribosomal subunit protein uS3 (267 aa).

The KH type-2 domain occupies 39-114 (IRKYLETNLK…RVNINIVEIR (76 aa)). Residues 229-248 (ANNRGRGNNRGRGNSRQNGG) are compositionally biased toward low complexity. The tract at residues 229-267 (ANNRGRGNNRGRGNSRQNGGRSRRPRQGQASTQGRGGNN) is disordered.

Belongs to the universal ribosomal protein uS3 family. Part of the 30S ribosomal subunit. Forms a tight complex with proteins S10 and S14.

Its function is as follows. Binds the lower part of the 30S subunit head. Binds mRNA in the 70S ribosome, positioning it for translation. The sequence is that of Small ribosomal subunit protein uS3 from Oenococcus oeni (strain ATCC BAA-331 / PSU-1).